The chain runs to 151 residues: Superoxide dismutase [Cu-Zn] A (151 aa).

A lipid anchor (S-palmitoyl cysteine) is attached at Cys-6. 3 residues coordinate Cu cation: His-45, His-47, and His-62. Residues Cys-56 and Cys-144 are joined by a disulfide bond. Residues His-62, His-70, His-79, and Asp-82 each coordinate Zn(2+). A Cu cation-binding site is contributed by His-118.

Belongs to the Cu-Zn superoxide dismutase family. As to quaternary structure, homodimer, and heterodimer of Superoxide dismutase [Cu-Zn] A and B. Requires Cu cation as cofactor. It depends on Zn(2+) as a cofactor.

Its subcellular location is the cytoplasm. The protein resides in the nucleus. It carries out the reaction 2 superoxide + 2 H(+) = H2O2 + O2. Its function is as follows. Destroys radicals which are normally produced within the cells and which are toxic to biological systems. This is Superoxide dismutase [Cu-Zn] A (sod1-a) from Xenopus laevis (African clawed frog).